Consider the following 365-residue polypeptide: UDP-N-acetylglucosamine--N-acetylmuramyl-(pentapeptide) pyrophosphoryl-undecaprenol N-acetylglucosamine transferase (365 aa).

UDP-N-acetyl-alpha-D-glucosamine-binding positions include 11-13 (TGG), N124, R165, S192, I246, and Q291.

It belongs to the glycosyltransferase 28 family. MurG subfamily.

The protein localises to the cell inner membrane. The enzyme catalyses di-trans,octa-cis-undecaprenyl diphospho-N-acetyl-alpha-D-muramoyl-L-alanyl-D-glutamyl-meso-2,6-diaminopimeloyl-D-alanyl-D-alanine + UDP-N-acetyl-alpha-D-glucosamine = di-trans,octa-cis-undecaprenyl diphospho-[N-acetyl-alpha-D-glucosaminyl-(1-&gt;4)]-N-acetyl-alpha-D-muramoyl-L-alanyl-D-glutamyl-meso-2,6-diaminopimeloyl-D-alanyl-D-alanine + UDP + H(+). Its pathway is cell wall biogenesis; peptidoglycan biosynthesis. Cell wall formation. Catalyzes the transfer of a GlcNAc subunit on undecaprenyl-pyrophosphoryl-MurNAc-pentapeptide (lipid intermediate I) to form undecaprenyl-pyrophosphoryl-MurNAc-(pentapeptide)GlcNAc (lipid intermediate II). The protein is UDP-N-acetylglucosamine--N-acetylmuramyl-(pentapeptide) pyrophosphoryl-undecaprenol N-acetylglucosamine transferase of Nitratidesulfovibrio vulgaris (strain ATCC 29579 / DSM 644 / CCUG 34227 / NCIMB 8303 / VKM B-1760 / Hildenborough) (Desulfovibrio vulgaris).